A 276-amino-acid chain; its full sequence is Bis(5'-nucleosyl)-tetraphosphatase, symmetrical (276 aa).

Belongs to the Ap4A hydrolase family.

The catalysed reaction is P(1),P(4)-bis(5'-adenosyl) tetraphosphate + H2O = 2 ADP + 2 H(+). Hydrolyzes diadenosine 5',5'''-P1,P4-tetraphosphate to yield ADP. The protein is Bis(5'-nucleosyl)-tetraphosphatase, symmetrical (apaH) of Neisseria meningitidis serogroup A / serotype 4A (strain DSM 15465 / Z2491).